The sequence spans 2089 residues: Non-reducing polyketide synthase PKS16 (2089 aa).

Residues 8 to 243 form an N-terminal acylcarrier protein transacylase (SAT) domain (SAT) region; the sequence is VLFGDQTVDP…IKLPITAAFH (236 aa). Residues 342–364 are disordered; the sequence is AGIEVSRSTEMQPRQEQRTKPRS. The span at 354–364 shows a compositional bias: basic and acidic residues; the sequence is PRQEQRTKPRS. The Ketosynthase family 3 (KS3) domain occupies 364 to 793; that stretch reads SSDIAIIGYA…GGNTSLLIED (430 aa). Catalysis depends on for beta-ketoacyl synthase activity residues Cys536, His671, and His710. Positions 891–1214 are malonyl-CoA:ACP transacylase (MAT) domain; sequence VFLFTGQGSQ…SIANAYNSGV (324 aa). Positions 1273-1586 are product template (PT) domain; that stretch reads TTCLQVIENE…KRTTLQSLLG (314 aa). Residues 1276–1408 are N-terminal hotdog fold; that stretch reads LQVIENETFT…CTVMYGDGHQ (133 aa). Residues 1276–1582 form the PKS/mFAS DH domain; that stretch reads LQVIENETFT…FQQMKRTTLQ (307 aa). The active-site Proton acceptor; for dehydratase activity is the His1309. The segment at 1435–1582 is C-terminal hotdog fold; sequence IHRMLKEMIY…FQQMKRTTLQ (148 aa). Asp1495 functions as the Proton donor; for dehydratase activity in the catalytic mechanism. Residues 1617-1694 enclose the Carrier 1 domain; the sequence is QSPVAGFSKV…ELRAFFLDKM (78 aa). O-(pantetheine 4'-phosphoryl)serine is present on Ser1654. A disordered region spans residues 1697 to 1730; sequence PQATANDDDSDDSSDDEGPGFSRSQSNSTISTPE. Over residues 1702-1714 the composition is skewed to acidic residues; that stretch reads NDDDSDDSSDDEG. Residues 1718–1728 show a composition bias toward polar residues; it reads SRSQSNSTIST. One can recognise a Carrier 2 domain in the interval 1729–1806; sequence PEEPDVVNVL…DVQKALGAAP (78 aa). Position 1766 is an O-(pantetheine 4'-phosphoryl)serine (Ser1766). A thioesterase (TE) domain region spans residues 1848–2083; it reads LFLLPDGAGS…VVGGNHFSIM (236 aa).

It functions in the pathway secondary metabolite biosynthesis. Functionally, non-reducing polyketide synthase; part of the gene cluster that mediates the biosynthesis of orcinol depsidone grayanic acid (GRA), the only major secondary metabolite known in C.grayi. The first step consists in the ring and depside synthesis by PKS16 leading to 4-O-demethylsphaerophorin, involving different orcinol-like rings, one with acetyl CoA and the other with octanoyl CoA as the starter. Further depsidone formation by the GRA cluster-specific cytochrome P450 leads to 4-O-demethylgrayanic acid. Finally, the cluster specific O-methyltransferase probably converts the 4-O-demethylgrayanic acid into grayanic acid. The protein is Non-reducing polyketide synthase PKS16 of Cladonia grayi (Gray's cup lichen).